A 69-amino-acid polypeptide reads, in one-letter code: uncharacterized protein (69 aa).

Residues 22–48 (LFRKSRELSPIKPVRTPTPPAPTPPPM) form a disordered region. Pro residues predominate over residues 37-48 (TPTPPAPTPPPM).

This is an uncharacterized protein from Lepidoptera (butterflies and moths).